Here is a 109-residue protein sequence, read N- to C-terminus: Nucleoid-associated protein LGAS_0369 (109 aa).

Belongs to the YbaB/EbfC family. In terms of assembly, homodimer.

The protein resides in the cytoplasm. The protein localises to the nucleoid. Binds to DNA and alters its conformation. May be involved in regulation of gene expression, nucleoid organization and DNA protection. This Lactobacillus gasseri (strain ATCC 33323 / DSM 20243 / BCRC 14619 / CIP 102991 / JCM 1131 / KCTC 3163 / NCIMB 11718 / NCTC 13722 / AM63) protein is Nucleoid-associated protein LGAS_0369.